The primary structure comprises 446 residues: Tol-Pal system protein TolB (446 aa).

The first 43 residues, 1 to 43 (MRKLWAPNWLSRRQNANPTRDQSRHALMAWLAAALMSAGAAHA), serve as a signal peptide directing secretion.

It belongs to the TolB family. In terms of assembly, the Tol-Pal system is composed of five core proteins: the inner membrane proteins TolA, TolQ and TolR, the periplasmic protein TolB and the outer membrane protein Pal. They form a network linking the inner and outer membranes and the peptidoglycan layer.

Its subcellular location is the periplasm. In terms of biological role, part of the Tol-Pal system, which plays a role in outer membrane invagination during cell division and is important for maintaining outer membrane integrity. This is Tol-Pal system protein TolB from Cupriavidus metallidurans (strain ATCC 43123 / DSM 2839 / NBRC 102507 / CH34) (Ralstonia metallidurans).